The following is a 93-amino-acid chain: Small ribosomal subunit protein uS19 (93 aa).

It belongs to the universal ribosomal protein uS19 family.

Its function is as follows. Protein S19 forms a complex with S13 that binds strongly to the 16S ribosomal RNA. This chain is Small ribosomal subunit protein uS19, found in Clostridium perfringens (strain ATCC 13124 / DSM 756 / JCM 1290 / NCIMB 6125 / NCTC 8237 / Type A).